The primary structure comprises 261 residues: Undecaprenyl-diphosphatase (261 aa).

7 helical membrane passes run 38 to 58 (RSDF…TFVF), 75 to 95 (RDYV…GLAV), 106 to 126 (IQPI…AESV), 136 to 156 (VTWS…VFPG), 181 to 201 (FSFL…CFEL), 217 to 237 (VAFV…LGYI), and 241 to 261 (SFAP…TWLT).

The protein belongs to the UppP family.

Its subcellular location is the cell inner membrane. The enzyme catalyses di-trans,octa-cis-undecaprenyl diphosphate + H2O = di-trans,octa-cis-undecaprenyl phosphate + phosphate + H(+). Its function is as follows. Catalyzes the dephosphorylation of undecaprenyl diphosphate (UPP). Confers resistance to bacitracin. In Xylella fastidiosa (strain Temecula1 / ATCC 700964), this protein is Undecaprenyl-diphosphatase.